We begin with the raw amino-acid sequence, 239 residues long: Thymidylate kinase (239 aa).

10–17 (GVNRVGKS) lines the ATP pocket.

Belongs to the thymidylate kinase family.

The enzyme catalyses dTMP + ATP = dTDP + ADP. It participates in pyrimidine metabolism; dTTP biosynthesis. Catalyzes the conversion of dTMP to dTDP. The chain is Thymidylate kinase (TMK) from African swine fever virus (isolate Tick/South Africa/Pretoriuskop Pr4/1996) (ASFV).